The sequence spans 109 residues: Movement protein TGB2 (109 aa).

The Cytoplasmic portion of the chain corresponds to 1–9 (MPLTPPPDF). The chain crosses the membrane as a helical span at residues 10-30 (TKVYLSAALGVSLALVVWLLI). The Lumenal segment spans residues 31–72 (RSTLPVVGDRDHNLPHGGWYRDGTKSVFYNSPGRLNSIEARK). The chain crosses the membrane as a helical span at residues 73–93 (APLLGQPWAIVVLLVLLIWAS). The Cytoplasmic segment spans residues 94-109 (HKLGRPNCRACAGSHT).

The protein belongs to the Tymovirales TGBp2 protein family.

Its subcellular location is the host endoplasmic reticulum membrane. In terms of biological role, plays a role in viral cell-to-cell propagation, by facilitating genome transport to neighboring plant cells through plasmosdesmata,. This is Movement protein TGB2 from Solanum tuberosum (Potato).